Reading from the N-terminus, the 203-residue chain is Glycerol-3-phosphate acyltransferase (203 aa).

The next 5 helical transmembrane spans lie at 5–25 (IYIAALVIGYLFGSIPFGLIL), 55–75 (LAAATLLLDALKGTAAVIVAA), 84–104 (IAANAAMLAALGAFLGHLFPV), 118–138 (IGVLIGLFWPAAVVFCIMWLA), and 159–179 (IFLWWFGHDSLASLFAVLTLL).

The protein belongs to the PlsY family. Probably interacts with PlsX.

It is found in the cell inner membrane. The enzyme catalyses an acyl phosphate + sn-glycerol 3-phosphate = a 1-acyl-sn-glycero-3-phosphate + phosphate. It participates in lipid metabolism; phospholipid metabolism. Its function is as follows. Catalyzes the transfer of an acyl group from acyl-phosphate (acyl-PO(4)) to glycerol-3-phosphate (G3P) to form lysophosphatidic acid (LPA). This enzyme utilizes acyl-phosphate as fatty acyl donor, but not acyl-CoA or acyl-ACP. The sequence is that of Glycerol-3-phosphate acyltransferase from Rhodopseudomonas palustris (strain ATCC BAA-98 / CGA009).